Here is a 611-residue protein sequence, read N- to C-terminus: Dihydroxy-acid dehydratase (611 aa).

Asp-81 is a binding site for Mg(2+). Cys-122 serves as a coordination point for [2Fe-2S] cluster. Mg(2+) is bound by residues Asp-123 and Lys-124. Lys-124 is modified (N6-carboxylysine). Cys-195 serves as a coordination point for [2Fe-2S] cluster. Glu-491 provides a ligand contact to Mg(2+). Ser-517 (proton acceptor) is an active-site residue.

It belongs to the IlvD/Edd family. In terms of assembly, homodimer. It depends on [2Fe-2S] cluster as a cofactor. Mg(2+) is required as a cofactor.

It carries out the reaction (2R)-2,3-dihydroxy-3-methylbutanoate = 3-methyl-2-oxobutanoate + H2O. The enzyme catalyses (2R,3R)-2,3-dihydroxy-3-methylpentanoate = (S)-3-methyl-2-oxopentanoate + H2O. The protein operates within amino-acid biosynthesis; L-isoleucine biosynthesis; L-isoleucine from 2-oxobutanoate: step 3/4. Its pathway is amino-acid biosynthesis; L-valine biosynthesis; L-valine from pyruvate: step 3/4. Functions in the biosynthesis of branched-chain amino acids. Catalyzes the dehydration of (2R,3R)-2,3-dihydroxy-3-methylpentanoate (2,3-dihydroxy-3-methylvalerate) into 2-oxo-3-methylpentanoate (2-oxo-3-methylvalerate) and of (2R)-2,3-dihydroxy-3-methylbutanoate (2,3-dihydroxyisovalerate) into 2-oxo-3-methylbutanoate (2-oxoisovalerate), the penultimate precursor to L-isoleucine and L-valine, respectively. This is Dihydroxy-acid dehydratase from Histophilus somni (strain 2336) (Haemophilus somnus).